The sequence spans 336 residues: Fructose-1,6-bisphosphatase class 2 (336 aa).

Mn(2+)-binding residues include D33, E57, D85, and E88. Residues 88 to 90, Y119, 164 to 166, 186 to 188, and G210 contribute to the substrate site; these read EGT, KPR, and DGD. E213 contributes to the Mn(2+) binding site.

It belongs to the FBPase class 2 family. In terms of assembly, homodimer. Mn(2+) serves as cofactor.

The protein resides in the cytoplasm. It carries out the reaction beta-D-fructose 1,6-bisphosphate + H2O = beta-D-fructose 6-phosphate + phosphate. It participates in carbohydrate biosynthesis; gluconeogenesis. Functionally, catalyzes the hydrolysis of fructose 1,6-bisphosphate to fructose 6-phosphate. The polypeptide is Fructose-1,6-bisphosphatase class 2 (glpX) (Shigella flexneri).